The primary structure comprises 689 residues: Protein asunder (689 aa).

Residues 521 to 550 adopt a coiled-coil conformation; it reads NGARLKLSKAKDQYRLLYRELEQLIQLNAT. Disordered stretches follow at residues 592-619 and 665-689; these read PERL…SKRR and GTKD…SVRS. Low complexity predominate over residues 599 to 614; it reads SSVGASGSSSSNSLLK. The Nuclear localization signal (NLS) signature appears at 613–619; sequence LKASKRR.

This sequence belongs to the Integrator subunit 13 family. In terms of assembly, belongs to the multiprotein complex Integrator, at least composed of IntS1, IntS2, IntS3, IntS4, omd/IntS5, IntS6, defl/IntS7, IntS8, IntS9, IntS10, IntS11, IntS12, asun/IntS13, IntS14 and IntS15. The core complex associates with protein phosphatase 2A subunits mts/PP2A and Pp2A-29B, to form the Integrator-PP2A (INTAC) complex. In terms of processing, phosphorylated. As to expression, expressed in nurse cells at stages 9-10 of oogenesis and exported to the oocyte. Also expressed in the follicle cells surrounding the oocyte.

It is found in the nucleus. The protein resides in the cytoplasm. The protein localises to the perinuclear region. Its function is as follows. Component of the integrator complex, a multiprotein complex that terminates RNA polymerase II (Pol II) transcription in the promoter-proximal region of genes. The integrator complex provides a quality checkpoint during transcription elongation by driving premature transcription termination of transcripts that are unfavorably configured for transcriptional elongation: the complex terminates transcription by (1) catalyzing dephosphorylation of the C-terminal domain (CTD) of Pol II subunit Polr2A/Rbp1 and Spt5, and (2) degrading the exiting nascent RNA transcript via endonuclease activity. The integrator complex is also involved in the 3'-end processing of the U7 snRNA, and also the spliceosomal snRNAs U1, U2, U4 and U5. Plays a role as a regulator of spermatogenesis. Crucial regulator of the mitotic cell cycle and development. Required for the correct dynein-dynactin perinuclear localization important for nucleus-centrosome coupling that occur upon meiotic progression of primary spermatocytes. Plays a role in sperm motility and fertility. May have a role in the PNG/PLU/GNU pathway. This Drosophila melanogaster (Fruit fly) protein is Protein asunder.